The following is a 187-amino-acid chain: Cerebral dopamine neurotrophic factor (187 aa).

An N-terminal signal peptide occupies residues 1–24 (MRCISPTALVTFCAGFCISNPVLA). Disulfide bonds link cysteine 37-cysteine 124, cysteine 40-cysteine 113, and cysteine 71-cysteine 82.

This sequence belongs to the ARMET family. Expressed at high levels in the heart, skeletal muscle, testis and brain (at protein level). In the brain, detected in the cerebral cortex neurons through layers II to VI. In the hippocampus, detected in the CA1 to CA3 pyramidal regions and in the granule and polymorph layers of dentate gyrus. Weak expression in the striatum. In substantia nigra, detected in solitary cells that did not express tyrosine hydroxylase, a marker for dopaminergic neurons. Relatively high expression in the Purkinje cells of the cerebellum and in regions of the brain stem, including the locus coeruleus.

Its subcellular location is the secreted. Trophic factor for dopamine neurons. Prevents the 6-hydroxydopamine (6-OHDA)-induced degeneration of dopaminergic neurons. When administered after 6-OHDA-lesioning, restores the dopaminergic function and prevents the degeneration of dopaminergic neurons in substantia nigra. The sequence is that of Cerebral dopamine neurotrophic factor (Cdnf) from Mus musculus (Mouse).